A 269-amino-acid polypeptide reads, in one-letter code: MRAVDFLRRATVCWYMRIYLASNNAHKHAEFSSLFPMHTILLPKDEGIDFFSPEDGSTFFANARQKADALYDVVHAPVLADDSGLCVDALDGDPGVHSARFGAQHGVHTDTARMQLLLERMHGRQDRACSFVCVAVLKLGSVPLCVGRGVCRGVLTTEMSGVEGFGYDPIFLLPHLGRTFAQLSIEEKNRVSHRALAALRLAQVLAMMQLPRALRYELKLLRGARRMTRGGVLRPGAPCAQRKGQTAQTARRHKFYARARRCARRIHRA.

A substrate-binding site is contributed by 22 to 27; the sequence is SNNAHK. The active-site Proton acceptor is aspartate 82. Aspartate 82 is a binding site for Mg(2+). Substrate-binding positions include serine 83, 165–168, lysine 188, and 193–194; these read FGYD and HR.

The protein belongs to the HAM1 NTPase family. As to quaternary structure, homodimer. The cofactor is Mg(2+).

The catalysed reaction is XTP + H2O = XMP + diphosphate + H(+). It carries out the reaction dITP + H2O = dIMP + diphosphate + H(+). It catalyses the reaction ITP + H2O = IMP + diphosphate + H(+). In terms of biological role, pyrophosphatase that catalyzes the hydrolysis of nucleoside triphosphates to their monophosphate derivatives, with a high preference for the non-canonical purine nucleotides XTP (xanthosine triphosphate), dITP (deoxyinosine triphosphate) and ITP. Seems to function as a house-cleaning enzyme that removes non-canonical purine nucleotides from the nucleotide pool, thus preventing their incorporation into DNA/RNA and avoiding chromosomal lesions. The polypeptide is dITP/XTP pyrophosphatase (Treponema pallidum (strain Nichols)).